The following is a 245-amino-acid chain: MPYRKYREKKYETKYREAFKVFQEKIGITFTDEKLLIQAFTHSSYVNEHRKKPHEDNERLEFLGDAVLELTVSQYLFQKYPTMSEGELTKLRAAIVCEPSLVRFANELSFGSLVLLGKGEEMTGGRERPALLADVFEAFIGALYLDQGLETVWEFLKEIVYPKINEGAFSHVMDYKSQLQELIQRDGSGNVEYQILQEKGPAHNREFVSRVTLNNVALGLGSGKSKKEAEQQAAAEALKKLKEQL.

The 130-residue stretch at 19-148 (FKVFQEKIGI…FIGALYLDQG (130 aa)) folds into the RNase III domain. E61 serves as a coordination point for Mg(2+). Residue D65 is part of the active site. Mg(2+) contacts are provided by D134 and E137. E137 is an active-site residue. The DRBM domain occupies 174–243 (DYKSQLQELI…AAEALKKLKE (70 aa)).

It belongs to the ribonuclease III family. As to quaternary structure, homodimer. It depends on Mg(2+) as a cofactor.

It is found in the cytoplasm. It catalyses the reaction Endonucleolytic cleavage to 5'-phosphomonoester.. Its function is as follows. Digests double-stranded RNA. Involved in the processing of primary rRNA transcript to yield the immediate precursors to the large and small rRNAs (23S and 16S). Processes some mRNAs, and tRNAs when they are encoded in the rRNA operon. Processes pre-crRNA and tracrRNA of type II CRISPR loci if present in the organism. In Bacillus cereus (strain ATCC 14579 / DSM 31 / CCUG 7414 / JCM 2152 / NBRC 15305 / NCIMB 9373 / NCTC 2599 / NRRL B-3711), this protein is Ribonuclease 3.